The primary structure comprises 169 residues: Ureidoglycolate lyase (169 aa).

This sequence belongs to the ureidoglycolate lyase family. In terms of assembly, homodimer. It depends on Ni(2+) as a cofactor.

The catalysed reaction is (S)-ureidoglycolate = urea + glyoxylate. It participates in nitrogen metabolism; (S)-allantoin degradation. Catalyzes the catabolism of the allantoin degradation intermediate (S)-ureidoglycolate, generating urea and glyoxylate. Involved in the utilization of allantoin as nitrogen source. This Pseudomonas paraeruginosa (strain DSM 24068 / PA7) (Pseudomonas aeruginosa (strain PA7)) protein is Ureidoglycolate lyase.